The following is a 292-amino-acid chain: tRNA (guanine-N(7)-)-methyltransferase (292 aa).

Positions 1–52 (MGKIEATSKEEKLRVQKEAEARRRAYRDLKKEARQMQKEVKFDTDDNSELPK) are disordered. S-adenosyl-L-methionine is bound by residues Gly-106, 129 to 130 (EI), 166 to 167 (NA), and Cys-186. Residue Asp-189 is part of the active site. 264–266 (TEE) serves as a coordination point for S-adenosyl-L-methionine.

The protein belongs to the class I-like SAM-binding methyltransferase superfamily. TrmB family. In terms of assembly, forms a complex with TRM82.

Its subcellular location is the nucleus. It carries out the reaction guanosine(46) in tRNA + S-adenosyl-L-methionine = N(7)-methylguanosine(46) in tRNA + S-adenosyl-L-homocysteine. It participates in tRNA modification; N(7)-methylguanine-tRNA biosynthesis. Functionally, catalyzes the formation of N(7)-methylguanine at position 46 (m7G46) in tRNA. The polypeptide is tRNA (guanine-N(7)-)-methyltransferase (Debaryomyces hansenii (strain ATCC 36239 / CBS 767 / BCRC 21394 / JCM 1990 / NBRC 0083 / IGC 2968) (Yeast)).